Here is a 211-residue protein sequence, read N- to C-terminus: Probable nicotinate-nucleotide adenylyltransferase (211 aa).

This sequence belongs to the NadD family.

The enzyme catalyses nicotinate beta-D-ribonucleotide + ATP + H(+) = deamido-NAD(+) + diphosphate. The protein operates within cofactor biosynthesis; NAD(+) biosynthesis; deamido-NAD(+) from nicotinate D-ribonucleotide: step 1/1. Functionally, catalyzes the reversible adenylation of nicotinate mononucleotide (NaMN) to nicotinic acid adenine dinucleotide (NaAD). In Shewanella frigidimarina (strain NCIMB 400), this protein is Probable nicotinate-nucleotide adenylyltransferase.